Here is a 496-residue protein sequence, read N- to C-terminus: Aspartyl/glutamyl-tRNA(Asn/Gln) amidotransferase subunit B (496 aa).

Belongs to the GatB/GatE family. GatB subfamily. In terms of assembly, heterotrimer of A, B and C subunits.

The enzyme catalyses L-glutamyl-tRNA(Gln) + L-glutamine + ATP + H2O = L-glutaminyl-tRNA(Gln) + L-glutamate + ADP + phosphate + H(+). The catalysed reaction is L-aspartyl-tRNA(Asn) + L-glutamine + ATP + H2O = L-asparaginyl-tRNA(Asn) + L-glutamate + ADP + phosphate + 2 H(+). Its function is as follows. Allows the formation of correctly charged Asn-tRNA(Asn) or Gln-tRNA(Gln) through the transamidation of misacylated Asp-tRNA(Asn) or Glu-tRNA(Gln) in organisms which lack either or both of asparaginyl-tRNA or glutaminyl-tRNA synthetases. The reaction takes place in the presence of glutamine and ATP through an activated phospho-Asp-tRNA(Asn) or phospho-Glu-tRNA(Gln). The protein is Aspartyl/glutamyl-tRNA(Asn/Gln) amidotransferase subunit B of Natronomonas pharaonis (strain ATCC 35678 / DSM 2160 / CIP 103997 / JCM 8858 / NBRC 14720 / NCIMB 2260 / Gabara) (Halobacterium pharaonis).